The primary structure comprises 162 residues: Large ribosomal subunit protein uL10 (162 aa).

The protein belongs to the universal ribosomal protein uL10 family. Part of the ribosomal stalk of the 50S ribosomal subunit. The N-terminus interacts with L11 and the large rRNA to form the base of the stalk. The C-terminus forms an elongated spine to which L12 dimers bind in a sequential fashion forming a multimeric L10(L12)X complex.

In terms of biological role, forms part of the ribosomal stalk, playing a central role in the interaction of the ribosome with GTP-bound translation factors. This Borrelia duttonii (strain Ly) protein is Large ribosomal subunit protein uL10.